The sequence spans 1049 residues: Nonsense-mediated mRNA decay protein 2 (1049 aa).

Positions L41–E282 constitute an MIF4G 1 domain. The residue at position 60 (Y60) is a Phosphotyrosine. The span at S412–E421 shows a compositional bias: polar residues. The interval S412 to T438 is disordered. The span at N422–T433 shows a compositional bias: basic and acidic residues. MIF4G domains are found at residues D446–P634 and E649–S855. Residues D909–E934 are disordered.

The protein localises to the cytoplasm. In terms of biological role, involved in nonsense-mediated decay of mRNAs containing premature stop codons. It interacts, via its C-terminus, with NAM7/UPF1. Could be involved in determining the efficiency of translational termination or reinitiation or factors involved in the initial assembly of an initiation- and termination-competent mRNP. This is Nonsense-mediated mRNA decay protein 2 (upf2) from Schizosaccharomyces pombe (strain 972 / ATCC 24843) (Fission yeast).